The primary structure comprises 421 residues: MKDMDSVSAMMSQIGQRAKEAAASLGFASVERKHAALISAAEHIWTQRAAILEANAKDIAYGRDKGLSDAMMDRLLLDEERLRGIVTSLRSVAEQADPVGEVIAAWDQPTGLHIERVRTPLGVIGVIYESRPNVTVDAGALCLKAGNAVILRGGSESFHSSKALHACLVQGLRDANLPEAAIQLVPTRDRAAVSEMLTMTDTIDVIVPRGGKGLVGLVQREARVPVFAHLEGIVHIYIDAAADAEKTLKVVMNAKTRRTGICGAAECLLIHKDVMPTLGADVIKELMRAGVEVRGDETLSAIQGVVKATADDWGREYLDMIVAARVVDDIDDAMAHIRTHGSNHTDCILTEDARAARRFMTELDSAIVMHNASTQFADGGEFGMGAEIGIATGKMHARGPVGAAQLTSFKYLVSGDGTTRA.

It belongs to the gamma-glutamyl phosphate reductase family.

It localises to the cytoplasm. The enzyme catalyses L-glutamate 5-semialdehyde + phosphate + NADP(+) = L-glutamyl 5-phosphate + NADPH + H(+). It participates in amino-acid biosynthesis; L-proline biosynthesis; L-glutamate 5-semialdehyde from L-glutamate: step 2/2. Catalyzes the NADPH-dependent reduction of L-glutamate 5-phosphate into L-glutamate 5-semialdehyde and phosphate. The product spontaneously undergoes cyclization to form 1-pyrroline-5-carboxylate. The sequence is that of Gamma-glutamyl phosphate reductase from Roseobacter denitrificans (strain ATCC 33942 / OCh 114) (Erythrobacter sp. (strain OCh 114)).